The following is a 362-amino-acid chain: tRNA-specific 2-thiouridylase MnmA 3 (362 aa).

ATP contacts are provided by residues 11–18 and Met-37; that span reads GMSGGIDS. Cys-91 (nucleophile) is an active-site residue. The cysteines at positions 91 and 188 are disulfide-linked. Residue Gly-115 participates in ATP binding. Positions 137 to 139 are interaction with tRNA; the sequence is KDQ. Cys-188 acts as the Cysteine persulfide intermediate in catalysis. The interaction with tRNA stretch occupies residues 296–297; that stretch reads RY.

Belongs to the MnmA/TRMU family.

It localises to the cytoplasm. It catalyses the reaction S-sulfanyl-L-cysteinyl-[protein] + uridine(34) in tRNA + AH2 + ATP = 2-thiouridine(34) in tRNA + L-cysteinyl-[protein] + A + AMP + diphosphate + H(+). Catalyzes the 2-thiolation of uridine at the wobble position (U34) of tRNA, leading to the formation of s(2)U34. This chain is tRNA-specific 2-thiouridylase MnmA 3, found in Bacteroides fragilis (strain ATCC 25285 / DSM 2151 / CCUG 4856 / JCM 11019 / LMG 10263 / NCTC 9343 / Onslow / VPI 2553 / EN-2).